The sequence spans 253 residues: Ice-binding protein (253 aa).

Positions 1 to 27 are cleaved as a signal peptide; the sequence is MKTLISNSKKVLIPLIMGSIFAGNVMA. C75 and C93 are disulfide-bonded. 2 consecutive short sequence motifs (ice-binding site motif (T-A/G-X-T/N)) follow at residues 220–223 and 232–235; these read TGTT and TAVT.

It belongs to the ice-binding protein family.

It localises to the secreted. In terms of biological role, binds to the surface of ice crystals and inhibits their growth. Has ice recrystallization inhibition (RI) activity (the ability to prevent the formation of larger grains of ice at the expense of smaller grains), which may protect membranes from freezing injury. Has high thermal hysteresis (TH) activity, which is the ability to lower the freezing point of an aqueous solution below its melting point, and thus the freezing of the cell fluid can be prevented protecting the organism from ice damage. The TH activity of this protein is 3.8 degrees Celsius at 14 mM. This is Ice-binding protein from Colwellia sp.